Reading from the N-terminus, the 492-residue chain is Chitooligosaccharide oxidase (492 aa).

The N-terminal stretch at 1-19 (MHFNTLTCVLVGLVAHTSA) is a signal peptide. In terms of domain architecture, FAD-binding PCMH-type spans 57–229 (LPFEPAAIAV…VELEFQTFAA (173 aa)). A cross-link (6-(S-cysteinyl)-8alpha-(pros-histidyl)-FAD (His-Cys)) is located at residues 94 to 154 (HSYTSLGFGG…GKRALAHGTC (61 aa)).

It belongs to the oxygen-dependent FAD-linked oxidoreductase family. FAD serves as cofactor. In terms of processing, the FAD cofactor is bound via a bicovalent 6-S-cysteinyl, 8alpha-N1-histidyl FAD linkage.

Its subcellular location is the secreted. It catalyses the reaction N,N'-diacetylchitobiose + O2 = N,N'-diacetylchitobiono-1,5-lactone + H2O2. The catalysed reaction is N,N',N''-triacetylchitotriose + O2 = N,N',N''-triacetylchitotriono-1,5-lactone + H2O2. The enzyme catalyses N,N',N'',N'''-tetraacetylchitotetraose + O2 = N,N',N'',N'''-tetraacetylchitotetraono-1,5-lactone + H2O2. Its function is as follows. Catalyzes the selective oxidation of C1 hydroxyl moieties on chitooligosaccharides with concomitant reduction of molecular oxygen to hydrogen peroxide. This results in the formation of the corresponding lactones, which typically undergo spontaneous hydrolysis. Chitooligosaccharides are homo- or heterooligomers of N-acetylglucosamine (GlcNAc) and D-glucosamine which are linked through beta-1,4-glycosidic bonds. For optimal substrate binding at least 2 GlcNAc units are needed, and chitooligosaccharide oxidase is most efficient on chitobiose, chitotriose and chitotetraose. This Gibberella zeae (strain ATCC MYA-4620 / CBS 123657 / FGSC 9075 / NRRL 31084 / PH-1) (Wheat head blight fungus) protein is Chitooligosaccharide oxidase.